Here is a 283-residue protein sequence, read N- to C-terminus: MELLQTIAAVRNYVAAARQRGLSIGLVPTMGYLHEGHLSLARAARQQNDVVIMSIFVNPTQFGPNEDFARYPRDLERDRELAAGAGVDAVFAPAVEEMYPAGYATYVQVEGLTEVLCGASRPGHFRGVTTVVSKLFNIVQPDRAYFGQKDYQQALVIKRMVRDLNFPIEIITIPTVREADGLALSSRNKYLTPEQRRSALSLHRALHLGSDLIKAGEREAAVVRRAMEKEITAWPETRIDYVAISDADTLKPLEKIAGRVLLALAVWVGNTRLIDNVVLEVND.

An ATP-binding site is contributed by 30–37 (MGYLHEGH). Catalysis depends on H37, which acts as the Proton donor. Residue Q61 coordinates (R)-pantoate. Q61 lines the beta-alanine pocket. 147–150 (GQKD) contacts ATP. A (R)-pantoate-binding site is contributed by Q153. ATP is bound by residues V176 and 184 to 187 (LSSR).

The protein belongs to the pantothenate synthetase family. As to quaternary structure, homodimer.

The protein resides in the cytoplasm. It carries out the reaction (R)-pantoate + beta-alanine + ATP = (R)-pantothenate + AMP + diphosphate + H(+). It participates in cofactor biosynthesis; (R)-pantothenate biosynthesis; (R)-pantothenate from (R)-pantoate and beta-alanine: step 1/1. Catalyzes the condensation of pantoate with beta-alanine in an ATP-dependent reaction via a pantoyl-adenylate intermediate. The sequence is that of Pantothenate synthetase from Moorella thermoacetica (strain ATCC 39073 / JCM 9320).